Here is a 448-residue protein sequence, read N- to C-terminus: tRNA-2-methylthio-N(6)-dimethylallyladenosine synthase (448 aa).

The MTTase N-terminal domain occupies 2-120; that stretch reads KKYRIIVFGC…LPELIGKVIE (119 aa). [4Fe-4S] cluster contacts are provided by Cys11, Cys47, Cys81, Cys158, Cys162, and Cys165. Residues 144–374 enclose the Radical SAM core domain; it reads RKEGVRAWVT…IKLQNKISLE (231 aa). The TRAM domain maps to 377 to 440; the sequence is EEEVGQTQEV…LAHLTGILSY (64 aa).

This sequence belongs to the methylthiotransferase family. MiaB subfamily. In terms of assembly, monomer. Requires [4Fe-4S] cluster as cofactor.

Its subcellular location is the cytoplasm. The catalysed reaction is N(6)-dimethylallyladenosine(37) in tRNA + (sulfur carrier)-SH + AH2 + 2 S-adenosyl-L-methionine = 2-methylsulfanyl-N(6)-dimethylallyladenosine(37) in tRNA + (sulfur carrier)-H + 5'-deoxyadenosine + L-methionine + A + S-adenosyl-L-homocysteine + 2 H(+). Functionally, catalyzes the methylthiolation of N6-(dimethylallyl)adenosine (i(6)A), leading to the formation of 2-methylthio-N6-(dimethylallyl)adenosine (ms(2)i(6)A) at position 37 in tRNAs that read codons beginning with uridine. The protein is tRNA-2-methylthio-N(6)-dimethylallyladenosine synthase of Pelotomaculum thermopropionicum (strain DSM 13744 / JCM 10971 / SI).